Reading from the N-terminus, the 215-residue chain is DNA polymerase III subunit epsilon (215 aa).

A divalent metal cation is bound by residues aspartate 19 and glutamate 21. Substrate contacts are provided by aspartate 19, glutamate 21, aspartate 62, and asparagine 67. Histidine 160 functions as the Proton acceptor in the catalytic mechanism. Aspartate 165 is a binding site for a divalent metal cation. Substrate is bound at residue aspartate 165.

DNA polymerase III contains a core (composed of alpha, epsilon and theta chains) that associates with a tau subunit. This core dimerizes to form the POLIII' complex. PolIII' associates with the gamma complex (composed of gamma, delta, delta', psi and chi chains) and with the beta chain to form the complete DNA polymerase III complex. It depends on Mg(2+) as a cofactor. Mn(2+) is required as a cofactor.

It catalyses the reaction DNA(n) + a 2'-deoxyribonucleoside 5'-triphosphate = DNA(n+1) + diphosphate. In terms of biological role, DNA polymerase III is a complex, multichain enzyme responsible for most of the replicative synthesis in bacteria. The epsilon subunit contain the editing function and is a proofreading 3'-5' exonuclease. This is DNA polymerase III subunit epsilon (dnaQ) from Treponema pallidum (strain Nichols).